The chain runs to 142 residues: Large ribosomal subunit protein uL13 (142 aa).

This sequence belongs to the universal ribosomal protein uL13 family. As to quaternary structure, part of the 50S ribosomal subunit.

This protein is one of the early assembly proteins of the 50S ribosomal subunit, although it is not seen to bind rRNA by itself. It is important during the early stages of 50S assembly. This is Large ribosomal subunit protein uL13 from Syntrophobacter fumaroxidans (strain DSM 10017 / MPOB).